We begin with the raw amino-acid sequence, 142 residues long: ATP synthase epsilon chain (142 aa).

It belongs to the ATPase epsilon chain family. In terms of assembly, F-type ATPases have 2 components, CF(1) - the catalytic core - and CF(0) - the membrane proton channel. CF(1) has five subunits: alpha(3), beta(3), gamma(1), delta(1), epsilon(1). CF(0) has three main subunits: a, b and c.

It is found in the cell inner membrane. Produces ATP from ADP in the presence of a proton gradient across the membrane. This is ATP synthase epsilon chain from Shewanella halifaxensis (strain HAW-EB4).